Reading from the N-terminus, the 212-residue chain is MAELTRIEGVLRTEFGKGASRRLRRDGRIPLVVYGNELDPVHVHVDTLDLHALVRNEGVNAVFELNIDGEDNLVMVKAIDQNVLTLDIDHADLLNVKRGERVEVEVPVIHEGLPAPGAMVVQDVDVLLLEVDVLDIPEEIVLDINGLEIGEQILAKDVKMPSNAVLVSDAEELVINIVEPEEEELPEDDEAAAEGEDAAAGEEAEAPAESED.

The disordered stretch occupies residues 179–212 (EPEEEELPEDDEAAAEGEDAAAGEEAEAPAESED).

It belongs to the bacterial ribosomal protein bL25 family. CTC subfamily. Part of the 50S ribosomal subunit; part of the 5S rRNA/L5/L18/L25 subcomplex. Contacts the 5S rRNA. Binds to the 5S rRNA independently of L5 and L18.

Functionally, this is one of the proteins that binds to the 5S RNA in the ribosome where it forms part of the central protuberance. This Corynebacterium urealyticum (strain ATCC 43042 / DSM 7109) protein is Large ribosomal subunit protein bL25.